Consider the following 179-residue polypeptide: UPF0227 protein Shewana3_2292 (179 aa).

This sequence belongs to the UPF0227 family.

This is UPF0227 protein Shewana3_2292 from Shewanella sp. (strain ANA-3).